The sequence spans 368 residues: Glutamate 5-kinase 1 (368 aa).

Residue Lys12 participates in ATP binding. Substrate contacts are provided by Ser52, Asp135, and Asn147. Residues 167 to 168 (SD) and 209 to 215 (TGGMKTK) contribute to the ATP site. The region spanning 274 to 348 (QGEVVVDGSF…DNEQSEFSEK (75 aa)) is the PUA domain.

Belongs to the glutamate 5-kinase family.

It localises to the cytoplasm. It catalyses the reaction L-glutamate + ATP = L-glutamyl 5-phosphate + ADP. The protein operates within amino-acid biosynthesis; L-proline biosynthesis; L-glutamate 5-semialdehyde from L-glutamate: step 1/2. Catalyzes the transfer of a phosphate group to glutamate to form L-glutamate 5-phosphate. The chain is Glutamate 5-kinase 1 from Pseudoalteromonas translucida (strain TAC 125).